We begin with the raw amino-acid sequence, 222 residues long: uncharacterized protein (222 aa).

The tat-type signal signal peptide spans 1-27 (MSFTRRKFVLGMGTVIFFTGSASSLLA). 4Fe-4S ferredoxin-type domains follow at residues 37–67 (YAMI…AQGS), 83–114 (TQYH…RDEQ), and 115–144 (GIVR…LNPV). [4Fe-4S] cluster contacts are provided by cysteine 46, cysteine 49, cysteine 52, cysteine 56, cysteine 92, cysteine 95, cysteine 100, cysteine 104, cysteine 124, cysteine 127, cysteine 130, cysteine 134, cysteine 151, cysteine 154, cysteine 167, and cysteine 171.

Exported by the Tat system. The position of the signal peptide cleavage has not been experimentally proven. Can also be exported by the Sec system.

This is an uncharacterized protein from Escherichia coli (strain K12).